Here is a 133-residue protein sequence, read N- to C-terminus: Holo-[acyl-carrier-protein] synthase (133 aa).

Mg(2+) is bound by residues Asp-8 and Glu-57.

Belongs to the P-Pant transferase superfamily. AcpS family. Mg(2+) is required as a cofactor.

The protein resides in the cytoplasm. It carries out the reaction apo-[ACP] + CoA = holo-[ACP] + adenosine 3',5'-bisphosphate + H(+). Its function is as follows. Transfers the 4'-phosphopantetheine moiety from coenzyme A to a Ser of acyl-carrier-protein. The chain is Holo-[acyl-carrier-protein] synthase from Bartonella henselae (strain ATCC 49882 / DSM 28221 / CCUG 30454 / Houston 1) (Rochalimaea henselae).